A 330-amino-acid chain; its full sequence is MDCPIPQTELDEIYAFATDLARKAGQLLLERVNDRNSEQVYAEKENAVDLVTQTDEDVESLIKTAIQTKYPAHKFLGEESYAKGQSREYLIDEQPTWCVDPLDGTVNFTHAFPMFCVSIGFIVNHYPVIGVIYAPMLNQLFSSCLNRGAWLNEMQQLPLIRKPSIPPLPATAPSKCIFACEWGKDRRDIPDGTLQRKIESFVNMAAERGSRGGKGGMVHGVRSLGSATMDLAYTAMGSVDIWWEGGCWEWDVAAGIAILLEAGGLVTAANPPEDIEGPIEPVKLGSRLYLAIRPAGPSETETGRETQERTVREVWRRVRQLDYERPTRQS.

Mg(2+) contacts are provided by glutamate 78, aspartate 100, leucine 102, aspartate 103, and aspartate 251. Glutamate 78 serves as a coordination point for substrate. Substrate-binding positions include 102–105 (LDGT) and aspartate 251.

The protein belongs to the inositol monophosphatase superfamily.

Functionally, not known. Probably involved in quinate metabolism. The sequence is that of Protein qutG (qutG) from Emericella nidulans (strain FGSC A4 / ATCC 38163 / CBS 112.46 / NRRL 194 / M139) (Aspergillus nidulans).